A 61-amino-acid chain; its full sequence is Small ribosomal subunit protein uS14 (61 aa).

Zn(2+) contacts are provided by C24, C27, C40, and C43.

Belongs to the universal ribosomal protein uS14 family. Zinc-binding uS14 subfamily. In terms of assembly, part of the 30S ribosomal subunit. Contacts proteins S3 and S10. Requires Zn(2+) as cofactor.

In terms of biological role, binds 16S rRNA, required for the assembly of 30S particles and may also be responsible for determining the conformation of the 16S rRNA at the A site. The protein is Small ribosomal subunit protein uS14 of Thermotoga neapolitana (strain ATCC 49049 / DSM 4359 / NBRC 107923 / NS-E).